We begin with the raw amino-acid sequence, 507 residues long: Peroxisomal membrane protein PEX14 (507 aa).

Polar residues-rich tracts occupy residues 1 to 10 and 32 to 48; these read MATHQQTQPP and EVQQ…SVFK. The interval 1 to 52 is disordered; it reads MATHQQTQPPSDFPALADENSQIPEATKPANEVQQATIAQDPPTSVFKNSEP. Topologically, residues 1–152 are peroxisomal; it reads MATHQQTQPP…QAAFLSRFRW (152 aa). Involved in interaction with PEX5 regions lie at residues 58–65 and 78–97; these read IQNAIKFL and RRSF…EAFR. Residues 153–173 form a helical membrane-spanning segment; it reads YHAILAVGVLAASGAGTAVFI. The Cytoplasmic segment spans residues 174–507; sequence KRSLIPRFKS…EQQHISQEGN (334 aa). The segment covering 288–302 has biased composition (polar residues); the sequence is VTTARKPYTNGSNVD. Disordered stretches follow at residues 288–329, 344–394, 409–435, and 448–507; these read VTTA…PKSY, NIRE…NPRS, ANQN…QPPP, and PKPQ…QEGN. Over residues 308–322 the composition is skewed to low complexity; sequence ARSASPPAAPADSSA. Residues 378 to 394 show a composition bias toward polar residues; that stretch reads QDESSNGQWWQQKNPRS.

It belongs to the peroxin-14 family. As to quaternary structure, interacts with PEX13; forming the PEX13-PEX14 docking complex. Interacts with PEX5 (via WxxxF/Y motifs). As to expression, expressed in flowers, siliques, leaves and roots.

It is found in the peroxisome membrane. In terms of biological role, component of the PEX13-PEX14 docking complex, a translocon channel that specifically mediates the import of peroxisomal cargo proteins bound to PEX5 receptor. The PEX13-PEX14 docking complex forms a large import pore which can be opened to a diameter of about 9 nm. Mechanistically, PEX5 receptor along with cargo proteins associates with the PEX14 subunit of the PEX13-PEX14 docking complex in the cytosol, leading to the insertion of the receptor into the organelle membrane with the concomitant translocation of the cargo into the peroxisome matrix. The sequence is that of Peroxisomal membrane protein PEX14 from Arabidopsis thaliana (Mouse-ear cress).